A 61-amino-acid polypeptide reads, in one-letter code: uncharacterized protein (61 aa).

Positions 23–61 (VPTKWQDYKKPGPNQKYTSDGKKRRRIRRSQKSILGVRS) are disordered. Over residues 44 to 53 (KKRRRIRRSQ) the composition is skewed to basic residues.

This is an uncharacterized protein from Archaeoglobus fulgidus (strain ATCC 49558 / DSM 4304 / JCM 9628 / NBRC 100126 / VC-16).